Reading from the N-terminus, the 373-residue chain is Glutamate 5-kinase 2 (373 aa).

Position 11 (K11) interacts with ATP. Substrate is bound by residues S51, D138, and N150. ATP-binding positions include 170–171 (SD) and 212–218 (TGGMKSK). The PUA domain occupies 279-355 (EGDIVVHNES…TNQETAASSQ (77 aa)).

It belongs to the glutamate 5-kinase family.

The protein resides in the cytoplasm. It carries out the reaction L-glutamate + ATP = L-glutamyl 5-phosphate + ADP. Its pathway is amino-acid biosynthesis; L-proline biosynthesis; L-glutamate 5-semialdehyde from L-glutamate: step 1/2. Functionally, catalyzes the transfer of a phosphate group to glutamate to form L-glutamate 5-phosphate. This chain is Glutamate 5-kinase 2, found in Bacillus licheniformis (strain ATCC 14580 / DSM 13 / JCM 2505 / CCUG 7422 / NBRC 12200 / NCIMB 9375 / NCTC 10341 / NRRL NRS-1264 / Gibson 46).